Here is a 458-residue protein sequence, read N- to C-terminus: Pyruvate kinase (458 aa).

R33 contributes to the substrate binding site. N35, S37, and D67 together coordinate K(+). 35–38 (NASH) is an ATP binding site. R74 and K148 together coordinate ATP. E214 contributes to the Mg(2+) binding site. Substrate contacts are provided by G237, D238, and T270. D238 is a Mg(2+) binding site.

This sequence belongs to the pyruvate kinase family. In terms of assembly, homotetramer. A divalent metal cation is required as a cofactor.

The enzyme catalyses pyruvate + ATP = phosphoenolpyruvate + ADP + H(+). It functions in the pathway carbohydrate degradation; glycolysis; pyruvate from D-glyceraldehyde 3-phosphate: step 5/5. With respect to regulation, not activated by classical allosteric effectors. This is Pyruvate kinase (pyk) from Aeropyrum pernix (strain ATCC 700893 / DSM 11879 / JCM 9820 / NBRC 100138 / K1).